Here is a 67-residue protein sequence, read N- to C-terminus: Large ribosomal subunit protein uL30 (67 aa).

The protein belongs to the universal ribosomal protein uL30 family. In terms of assembly, part of the 50S ribosomal subunit.

This chain is Large ribosomal subunit protein uL30, found in Thermotoga maritima (strain ATCC 43589 / DSM 3109 / JCM 10099 / NBRC 100826 / MSB8).